We begin with the raw amino-acid sequence, 120 residues long: uncharacterized protein (120 aa).

To M.jannaschii MJ0361.

This is an uncharacterized protein from Methanocaldococcus jannaschii (strain ATCC 43067 / DSM 2661 / JAL-1 / JCM 10045 / NBRC 100440) (Methanococcus jannaschii).